The sequence spans 224 residues: Large ribosomal subunit protein uL1 (224 aa).

It belongs to the universal ribosomal protein uL1 family. Part of the 50S ribosomal subunit.

In terms of biological role, binds directly to 23S rRNA. The L1 stalk is quite mobile in the ribosome, and is involved in E site tRNA release. Its function is as follows. Protein L1 is also a translational repressor protein, it controls the translation of the L11 operon by binding to its mRNA. The protein is Large ribosomal subunit protein uL1 of Borrelia duttonii (strain Ly).